The primary structure comprises 571 residues: Proline-rich protein 35 (571 aa).

Disordered regions lie at residues 1 to 27 (MSREAGSCRVGTGARARSRKPKKPHYI), 79 to 187 (GSTT…EGSV), 286 to 402 (APVS…GSPE), and 476 to 571 (GPQA…GAEV). Positions 16–26 (ARSRKPKKPHY) are enriched in basic residues. A compositionally biased stretch (gly residues) spans 165-175 (GMGGDPRGVGA). Positions 316-336 (TPRDPGQEGELERAAQSDPRR) are enriched in basic and acidic residues. Positions 351 to 367 (PSLTRFCSRSSLPTGSS) are enriched in polar residues. Positions 380 to 399 (PETPGPEGPLPLQPRGPVPG) are enriched in pro residues.

The chain is Proline-rich protein 35 (PRR35) from Homo sapiens (Human).